The sequence spans 89 residues: Small ribosomal subunit protein uS15 (89 aa).

The protein belongs to the universal ribosomal protein uS15 family. In terms of assembly, part of the 30S ribosomal subunit. Forms a bridge to the 50S subunit in the 70S ribosome, contacting the 23S rRNA.

Its function is as follows. One of the primary rRNA binding proteins, it binds directly to 16S rRNA where it helps nucleate assembly of the platform of the 30S subunit by binding and bridging several RNA helices of the 16S rRNA. Forms an intersubunit bridge (bridge B4) with the 23S rRNA of the 50S subunit in the ribosome. The chain is Small ribosomal subunit protein uS15 from Gluconobacter oxydans (strain 621H) (Gluconobacter suboxydans).